The chain runs to 109 residues: Aquaporin-2 (109 aa).

Topologically, residues 1 to 6 are cytoplasmic; it reads SIAFSR. A helical membrane pass occupies residues 7–27; it reads AVFAEFLATLIFVFFGLGSAL. Residues 28 to 35 lie on the Extracellular side of the membrane; it reads NWQQSLPS. Residues 36–54 form a helical membrane-spanning segment; that stretch reads VLQIAMAFGLAIGTLVQAL. Topologically, residues 55-59 are cytoplasmic; sequence GHISG. An intramembrane region (discontinuously helical) is located at residues 60-69; that stretch reads AHINPAVTVA. The short motif at 63–65 is the NPA 1 element; sequence NPA. The Cytoplasmic portion of the chain corresponds to 70-80; it reads CLVGCHVSFLR. A helical membrane pass occupies residues 81-102; the sequence is AAFYVAAQLLGAVAGAALLHEV. The Extracellular segment spans residues 103 to 109; that stretch reads TPSDVRG.

This sequence belongs to the MIP/aquaporin (TC 1.A.8) family. In terms of assembly, homotetramer. In terms of processing, serine phosphorylation is necessary and sufficient for expression at the apical membrane. Endocytosis is not phosphorylation-dependent. N-glycosylated.

Its subcellular location is the apical cell membrane. The protein resides in the basolateral cell membrane. It is found in the cell membrane. It localises to the cytoplasmic vesicle membrane. The protein localises to the golgi apparatus. Its subcellular location is the trans-Golgi network membrane. The catalysed reaction is H2O(in) = H2O(out). It catalyses the reaction glycerol(in) = glycerol(out). Its function is as follows. Forms a water-specific channel that provides the plasma membranes of renal collecting duct with high permeability to water, thereby permitting water to move in the direction of an osmotic gradient. Plays an essential role in renal water homeostasis. Could also be permeable to glycerol. The protein is Aquaporin-2 of Talpa europaea (European mole).